An 87-amino-acid polypeptide reads, in one-letter code: Small ribosomal subunit protein bS21 (87 aa).

Basic and acidic residues predominate over residues 47–63; it reads YEKPSEKRARQKAEAVR. The tract at residues 47 to 87 is disordered; the sequence is YEKPSEKRARQKAEAVRRARKLARKRAQREGLLPMPKKPGR. Positions 64 to 73 are enriched in basic residues; the sequence is RARKLARKRA.

This sequence belongs to the bacterial ribosomal protein bS21 family.

This chain is Small ribosomal subunit protein bS21, found in Caulobacter vibrioides (strain ATCC 19089 / CIP 103742 / CB 15) (Caulobacter crescentus).